The sequence spans 250 residues: TBC1 domain family member 26 (250 aa).

A Rab-GAP TBC domain is found at 101 to 250 (VIPLAVRGRA…RCCTSPSQRS (150 aa)).

Functionally, may act as a GTPase-activating protein for Rab family protein(s). This chain is TBC1 domain family member 26 (TBC1D26), found in Homo sapiens (Human).